The following is a 225-amino-acid chain: MQKKAVILYSGGLDSTTCLAIAKEQGFAPYALSFSYGQRHQQELEVAKLNARPMGAVDHLLVEFDLRKMGGSALTSDIEVPKEGVGEEIPVTYVPARNTIFLSFALGWAETLDCFDIFIGVNALDYSGYPDCRPEFISAYETMANLATKAGVEGKRLKIHTPLISLTKAEIIQKGLSLGVDYSKTHSCYDPAEDGAACGRCDSCRLRLKGFAEAGVTDPVKYQKL.

Tyr-9–Leu-19 contacts ATP. The Zn(2+) site is built by Cys-188, Cys-198, Cys-201, and Cys-204.

It belongs to the QueC family. Requires Zn(2+) as cofactor.

It carries out the reaction 7-carboxy-7-deazaguanine + NH4(+) + ATP = 7-cyano-7-deazaguanine + ADP + phosphate + H2O + H(+). It participates in purine metabolism; 7-cyano-7-deazaguanine biosynthesis. Its function is as follows. Catalyzes the ATP-dependent conversion of 7-carboxy-7-deazaguanine (CDG) to 7-cyano-7-deazaguanine (preQ(0)). The polypeptide is 7-cyano-7-deazaguanine synthase (Citrifermentans bemidjiense (strain ATCC BAA-1014 / DSM 16622 / JCM 12645 / Bem) (Geobacter bemidjiensis)).